The following is a 217-amino-acid chain: Proteasome subunit beta (217 aa).

The propeptide at 1-14 (MIANNDQYKEYMKG) is removed in mature form; by autocatalysis. T15 functions as the Nucleophile in the catalytic mechanism.

It belongs to the peptidase T1B family. In terms of assembly, the 20S proteasome core is composed of 14 alpha and 14 beta subunits that assemble into four stacked heptameric rings, resulting in a barrel-shaped structure. The two inner rings, each composed of seven catalytic beta subunits, are sandwiched by two outer rings, each composed of seven alpha subunits. The catalytic chamber with the active sites is on the inside of the barrel. Has a gated structure, the ends of the cylinder being occluded by the N-termini of the alpha-subunits. Is capped at one or both ends by the proteasome regulatory ATPase, PAN.

It localises to the cytoplasm. It catalyses the reaction Cleavage of peptide bonds with very broad specificity.. Its activity is regulated as follows. The formation of the proteasomal ATPase PAN-20S proteasome complex, via the docking of the C-termini of PAN into the intersubunit pockets in the alpha-rings, triggers opening of the gate for substrate entry. Interconversion between the open-gate and close-gate conformations leads to a dynamic regulation of the 20S proteasome proteolysis activity. Component of the proteasome core, a large protease complex with broad specificity involved in protein degradation. The chain is Proteasome subunit beta from Methanococcus aeolicus (strain ATCC BAA-1280 / DSM 17508 / OCM 812 / Nankai-3).